The primary structure comprises 306 residues: Extensin (306 aa).

Positions 1-32 (MGRIARGSKMSSLIVSLLVVLVSLNLASETTA) are cleaved as a signal peptide. The disordered stretch occupies residues 33 to 306 (KYTYSSPPPP…YTSPPPPHHY (274 aa)). Composition is skewed to pro residues over residues 38 to 122 (SPPP…PKHS), 133 to 152 (SPPP…PKHS), 183 to 214 (SPPP…PKHS), and 225 to 290 (SPPP…SPPP).

Hydroxylated on proline residues in the S-P-P-P-P repeat. Post-translationally, O-glycosylated on hydroxyprolines.

Its subcellular location is the secreted. It localises to the primary cell wall. Structural component in primary cell wall. This is Extensin from Daucus carota (Wild carrot).